A 254-amino-acid chain; its full sequence is 5'/3'-nucleotidase SurE (254 aa).

The a divalent metal cation site is built by D9, D10, S40, and N93.

It belongs to the SurE nucleotidase family. It depends on a divalent metal cation as a cofactor.

The protein localises to the cytoplasm. The catalysed reaction is a ribonucleoside 5'-phosphate + H2O = a ribonucleoside + phosphate. The enzyme catalyses a ribonucleoside 3'-phosphate + H2O = a ribonucleoside + phosphate. It carries out the reaction [phosphate](n) + H2O = [phosphate](n-1) + phosphate + H(+). Functionally, nucleotidase with a broad substrate specificity as it can dephosphorylate various ribo- and deoxyribonucleoside 5'-monophosphates and ribonucleoside 3'-monophosphates with highest affinity to 3'-AMP. Also hydrolyzes polyphosphate (exopolyphosphatase activity) with the preference for short-chain-length substrates (P20-25). Might be involved in the regulation of dNTP and NTP pools, and in the turnover of 3'-mononucleotides produced by numerous intracellular RNases (T1, T2, and F) during the degradation of various RNAs. This is 5'/3'-nucleotidase SurE from Yersinia pestis bv. Antiqua (strain Antiqua).